Reading from the N-terminus, the 573-residue chain is 2-succinyl-5-enolpyruvyl-6-hydroxy-3-cyclohexene-1-carboxylate synthase (573 aa).

The protein belongs to the TPP enzyme family. MenD subfamily. Homodimer. Mg(2+) is required as a cofactor. Mn(2+) serves as cofactor. It depends on thiamine diphosphate as a cofactor.

The catalysed reaction is isochorismate + 2-oxoglutarate + H(+) = 5-enolpyruvoyl-6-hydroxy-2-succinyl-cyclohex-3-ene-1-carboxylate + CO2. It functions in the pathway quinol/quinone metabolism; 1,4-dihydroxy-2-naphthoate biosynthesis; 1,4-dihydroxy-2-naphthoate from chorismate: step 2/7. Its pathway is quinol/quinone metabolism; menaquinone biosynthesis. Catalyzes the thiamine diphosphate-dependent decarboxylation of 2-oxoglutarate and the subsequent addition of the resulting succinic semialdehyde-thiamine pyrophosphate anion to isochorismate to yield 2-succinyl-5-enolpyruvyl-6-hydroxy-3-cyclohexene-1-carboxylate (SEPHCHC). The chain is 2-succinyl-5-enolpyruvyl-6-hydroxy-3-cyclohexene-1-carboxylate synthase from Shewanella sp. (strain W3-18-1).